A 135-amino-acid polypeptide reads, in one-letter code: Cytochrome b5, seed isoform (135 aa).

The Cytochrome b5 heme-binding domain maps to 5 to 81 (SKVFTLAEVS…LDEYYVGDID (77 aa)). Heme-binding residues include His-40 and His-64. Residues 107 to 127 (FIVKLLQFLVPLIILGVAFGV) traverse the membrane as a helical segment.

It belongs to the cytochrome b5 family. Specifically expressed in developing seeds.

It is found in the endoplasmic reticulum membrane. The protein resides in the microsome membrane. Its function is as follows. Cytochrome b5 is a membrane bound hemoprotein which function as an electron carrier for several membrane bound oxygenases. May play a key role in the modification by desaturation of fatty acids in the endoplasmic reticulum, which in the developing seed is utilized for membrane synthesis and in the developmentally regulated production of large amounts of storage lipids. The chain is Cytochrome b5, seed isoform from Nicotiana tabacum (Common tobacco).